The sequence spans 35 residues: uncharacterized protein (35 aa).

Residues V14–W34 traverse the membrane as a helical segment.

The protein localises to the membrane. This is an uncharacterized protein from Escherichia coli (strain K12).